The chain runs to 406 residues: Oligouridylate-binding protein 1 (406 aa).

2 consecutive RRM domains span residues 49–123 (RSVY…WAYA) and 134–212 (YNIF…WAAK). The tract at residues 231 to 250 (TSGTSDDGQEKVVNEDAPEN) is disordered. The RRM 3 domain maps to 255–329 (TTVYVGNLAP…KPVKCSWGSK (75 aa)).

Its subcellular location is the nucleus. In terms of biological role, heterogeneous nuclear ribonucleoprotein (hnRNP)-like protein that acts as a component of the pre-mRNA processing machinery. Functions to facilitate the nuclear maturation of plant pre-mRNAs. Binds with high affinity to RNA molecules that contain AU-rich regions. May bind to the 3'-UTR and protects the mRNA against exonucleolytic degradation. Associates with nuclear poly(A)+ RNA in nucleus in vivo. Does not stimulate transcription or the 3' end cleavage/polyadenylation reaction. The sequence is that of Oligouridylate-binding protein 1 (UBP1) from Nicotiana plumbaginifolia (Leadwort-leaved tobacco).